A 70-amino-acid chain; its full sequence is Spore germination protein-like protein YpzD (70 aa).

This sequence belongs to the GerPA/GerPF family.

The protein is Spore germination protein-like protein YpzD (ypzD) of Bacillus subtilis (strain 168).